We begin with the raw amino-acid sequence, 304 residues long: Non-specific ribonucleoside hydrolase RihC (304 aa).

The active site involves His233.

Belongs to the IUNH family. RihC subfamily.

Functionally, hydrolyzes both purine and pyrimidine ribonucleosides with a broad-substrate specificity. The sequence is that of Non-specific ribonucleoside hydrolase RihC from Klebsiella pneumoniae (strain 342).